Reading from the N-terminus, the 274-residue chain is 2,3,4,5-tetrahydropyridine-2,6-dicarboxylate N-succinyltransferase (274 aa).

2 residues coordinate substrate: arginine 104 and aspartate 141.

It belongs to the transferase hexapeptide repeat family. In terms of assembly, homotrimer.

The protein localises to the cytoplasm. The catalysed reaction is (S)-2,3,4,5-tetrahydrodipicolinate + succinyl-CoA + H2O = (S)-2-succinylamino-6-oxoheptanedioate + CoA. It functions in the pathway amino-acid biosynthesis; L-lysine biosynthesis via DAP pathway; LL-2,6-diaminopimelate from (S)-tetrahydrodipicolinate (succinylase route): step 1/3. The chain is 2,3,4,5-tetrahydropyridine-2,6-dicarboxylate N-succinyltransferase (dapD) from Escherichia coli O157:H7.